The sequence spans 486 residues: UDP-N-acetylmuramoyl-L-alanyl-D-glutamate--2,6-diaminopimelate ligase (486 aa).

Ser33 contributes to the UDP-N-acetyl-alpha-D-muramoyl-L-alanyl-D-glutamate binding site. 110–116 (GTNGKTS) is an ATP binding site. Residues 152–153 (TT), Ser179, Gln185, and Arg187 contribute to the UDP-N-acetyl-alpha-D-muramoyl-L-alanyl-D-glutamate site. Lys219 is subject to N6-carboxylysine. Residues Arg383, 407 to 410 (DNPR), Gly455, and Glu459 each bind meso-2,6-diaminopimelate. A Meso-diaminopimelate recognition motif motif is present at residues 407–410 (DNPR).

It belongs to the MurCDEF family. MurE subfamily. Requires Mg(2+) as cofactor. In terms of processing, carboxylation is probably crucial for Mg(2+) binding and, consequently, for the gamma-phosphate positioning of ATP.

The protein resides in the cytoplasm. The enzyme catalyses UDP-N-acetyl-alpha-D-muramoyl-L-alanyl-D-glutamate + meso-2,6-diaminopimelate + ATP = UDP-N-acetyl-alpha-D-muramoyl-L-alanyl-gamma-D-glutamyl-meso-2,6-diaminopimelate + ADP + phosphate + H(+). It functions in the pathway cell wall biogenesis; peptidoglycan biosynthesis. Catalyzes the addition of meso-diaminopimelic acid to the nucleotide precursor UDP-N-acetylmuramoyl-L-alanyl-D-glutamate (UMAG) in the biosynthesis of bacterial cell-wall peptidoglycan. This Zymomonas mobilis subsp. mobilis (strain ATCC 31821 / ZM4 / CP4) protein is UDP-N-acetylmuramoyl-L-alanyl-D-glutamate--2,6-diaminopimelate ligase.